A 383-amino-acid polypeptide reads, in one-letter code: Putative glutamate--cysteine ligase 2-2 (383 aa).

The disordered stretch occupies residues 35-56; the sequence is RGDRDGAGGPPGGADPDGDLDG.

It belongs to the glutamate--cysteine ligase type 2 family. YbdK subfamily.

The enzyme catalyses L-cysteine + L-glutamate + ATP = gamma-L-glutamyl-L-cysteine + ADP + phosphate + H(+). ATP-dependent carboxylate-amine ligase which exhibits weak glutamate--cysteine ligase activity. This is Putative glutamate--cysteine ligase 2-2 from Frankia alni (strain DSM 45986 / CECT 9034 / ACN14a).